The following is an 883-amino-acid chain: Lysine-specific demethylase JMJ29 (883 aa).

2 disordered regions span residues Lys30 to Lys62 and Arg161 to Gln204. The span at Ser34–Ser43 shows a compositional bias: low complexity. Polar residues-rich tracts occupy residues Arg161 to Asn172 and Ser184 to Gln204. The Zn(2+) site is built by Cys209, Cys212, Cys223, Cys226, Cys232, Cys235, Cys252, Cys255, Cys338, Cys341, Cys363, and His381. The segment at Cys209–Arg256 adopts an RING-type; degenerate zinc-finger fold. The segment at Asp333–Gly392 adopts a B box-type; atypical zinc-finger fold. The JmjC domain maps to Pro632 to Arg863. Positions 676 and 678 each coordinate Fe cation. Positions Asn713–Glu743 are disordered. Over residues Asp722 to Asn735 the composition is skewed to acidic residues. The Nuclear localization signal motif lies at Phe755–Lys762. His831 serves as a coordination point for Fe cation.

This sequence belongs to the JARID1 histone demethylase family. It depends on Fe(2+) as a cofactor. As to expression, expressed in inflorescences, roots, siliques, leaves and stems.

It localises to the nucleus. Functionally, may function as histone H3 lysine demethylase and be involved in regulation of gene expression. This is Lysine-specific demethylase JMJ29 from Arabidopsis thaliana (Mouse-ear cress).